The following is a 317-amino-acid chain: Putative peptide import ATP-binding protein BruAb2_0797 (317 aa).

In terms of domain architecture, ABC transporter spans 7–250 (LSVRGLAKHY…PQHPYTRALL (244 aa)). 43 to 50 (GESGSGKT) contributes to the ATP binding site.

It belongs to the ABC transporter superfamily. The complex is composed of two ATP-binding proteins (BruAb2_0796 and BruAb2_0797), two transmembrane proteins (BruAb2_0794) and a solute-binding protein (BruAb2_0792).

It is found in the cell inner membrane. Its function is as follows. Probably part of an ABC transporter complex that could be involved in peptide import. Probably responsible for energy coupling to the transport system. In Brucella abortus biovar 1 (strain 9-941), this protein is Putative peptide import ATP-binding protein BruAb2_0797.